The chain runs to 397 residues: Carnitine transport ATP-binding protein OpuCA (397 aa).

An ABC transporter domain is found at 2–236 (LKFEHVTKTY…PANSFVEDFI (235 aa)). 35 to 42 (GPSGCGKT) contributes to the ATP binding site. CBS domains are found at residues 255–311 (MNTN…ATSV) and 315–373 (IEKN…WGTL). The tract at residues 377-397 (TENQEEQADSKTTEPEMKQEG) is disordered. Residues 384-397 (ADSKTTEPEMKQEG) are compositionally biased toward basic and acidic residues.

Belongs to the ABC transporter superfamily. The complex is composed of two ATP-binding proteins (OpuCA), two transmembrane proteins (OpuCB and OpuCD) and a solute-binding protein (OpuCC).

The catalysed reaction is a quaternary ammonium(out) + ATP + H2O = a quaternary ammonium(in) + ADP + phosphate + H(+). In terms of biological role, part of the ABC transporter complex OpuCABCD involved in carnitine uptake. Probably responsible for energy coupling to the transport system. Involved, with BetL and GbuABC, in osmoprotection and cryoprotection of Listeria. Can also mediate weak glycine betaine transport. This Listeria monocytogenes serotype 1/2a (strain 10403S) protein is Carnitine transport ATP-binding protein OpuCA (opuCA).